The following is a 298-amino-acid chain: Glutamyl-Q tRNA(Asp) synthetase (298 aa).

L-glutamate contacts are provided by residues 9–13 (RFAPS) and E45. The short motif at 12 to 22 (PSPSGELHFGS) is the 'HIGH' region element. Zn(2+)-binding residues include C101, C103, Y115, and C119. 2 residues coordinate L-glutamate: Y172 and R190. A 'KMSKS' region motif is present at residues 228-232 (KLSKQ). K231 provides a ligand contact to ATP.

Belongs to the class-I aminoacyl-tRNA synthetase family. GluQ subfamily. Zn(2+) is required as a cofactor.

In terms of biological role, catalyzes the tRNA-independent activation of glutamate in presence of ATP and the subsequent transfer of glutamate onto a tRNA(Asp). Glutamate is transferred on the 2-amino-5-(4,5-dihydroxy-2-cyclopenten-1-yl) moiety of the queuosine in the wobble position of the QUC anticodon. This is Glutamyl-Q tRNA(Asp) synthetase from Salmonella choleraesuis (strain SC-B67).